The chain runs to 155 residues: S-ribosylhomocysteine lyase (155 aa).

3 residues coordinate Fe cation: histidine 58, histidine 62, and cysteine 125.

It belongs to the LuxS family. In terms of assembly, homodimer. Requires Fe cation as cofactor.

The enzyme catalyses S-(5-deoxy-D-ribos-5-yl)-L-homocysteine = (S)-4,5-dihydroxypentane-2,3-dione + L-homocysteine. Functionally, involved in the synthesis of autoinducer 2 (AI-2) which is secreted by bacteria and is used to communicate both the cell density and the metabolic potential of the environment. The regulation of gene expression in response to changes in cell density is called quorum sensing. Catalyzes the transformation of S-ribosylhomocysteine (RHC) to homocysteine (HC) and 4,5-dihydroxy-2,3-pentadione (DPD). The chain is S-ribosylhomocysteine lyase from Chromohalobacter salexigens (strain ATCC BAA-138 / DSM 3043 / CIP 106854 / NCIMB 13768 / 1H11).